The following is a 79-amino-acid chain: Pigment-dispersing hormone type 1 (79 aa).

The signal sequence occupies residues 1 to 22; sequence MRSAVVVALLVMVAMSLQLTAA. Alanine 76 is modified (alanine amide).

This sequence belongs to the arthropod PDH family. As to expression, eyestalk.

It localises to the secreted. Its function is as follows. The pigment-dispersing hormone causes the migration of the distal retinal pigment into the proximal end of the pigment chromatophore cells and thus decreases the amount of light entering the retinulas. May also function as a neurotransmitter and/or neuromodulator. The sequence is that of Pigment-dispersing hormone type 1 (PDH1) from Penaeus vannamei (Whiteleg shrimp).